Here is a 296-residue protein sequence, read N- to C-terminus: Acetaldehyde dehydrogenase (296 aa).

15–18 (SGNI) is an NAD(+) binding site. The active-site Acyl-thioester intermediate is the cysteine 132. NAD(+) is bound by residues 164-172 (SAGPATRAN) and asparagine 274.

Belongs to the acetaldehyde dehydrogenase family. In terms of assembly, interacts with MhpE.

It carries out the reaction acetaldehyde + NAD(+) + CoA = acetyl-CoA + NADH + H(+). It functions in the pathway aromatic compound metabolism; 3-phenylpropanoate degradation. In terms of biological role, catalyzes the conversion of acetaldehyde to acetyl-CoA, using NAD(+) and coenzyme A. Is the final enzyme in the meta-cleavage pathway for the degradation of aromatic compounds. In Pectobacterium atrosepticum (strain SCRI 1043 / ATCC BAA-672) (Erwinia carotovora subsp. atroseptica), this protein is Acetaldehyde dehydrogenase.